An 81-amino-acid chain; its full sequence is Small ribosomal subunit protein bS16 (81 aa).

The protein belongs to the bacterial ribosomal protein bS16 family.

The sequence is that of Small ribosomal subunit protein bS16 from Clostridium acetobutylicum (strain ATCC 824 / DSM 792 / JCM 1419 / IAM 19013 / LMG 5710 / NBRC 13948 / NRRL B-527 / VKM B-1787 / 2291 / W).